Here is a 667-residue protein sequence, read N- to C-terminus: MTAFQLQAPFQPTGDQPAAIDQLVDSLQNQHRFQTLLGATGTGKTFTIAAVIEKIGRPTLVLAHNKTLAAQLCNELRQFFPNNAVEYFISYYDYYQPEAYIPVSDTYIEKSSSINDEIDMLRHSATRSLFERRDVIVVASISCIYGLGMPAEYLKAAISLTVGQEFDQRQLLRALVSVQYNRNDLELTRGRFRLKGDILEIVPAYEDRVIKIDFFGDEIESIRYLDPLTGEVLQKLERISIYPARHFVTPEERLEVACRDIKTELDNRLLELEKAGKLLEAQRLDQRTRYDLEMLQEVGYCNGVENYSRHLAGRLAGEPPECLVDYFPEDWLLVVDESHVSVPQIRGMYNGDQSRKKVLIDHGFRLPSAADNRPLKSEEFWQKVNQCIFVSATPGDWELEQSENRIVEQIIRPTGVLDPEIFVRPTEGQVDDLLGEIKERVQLNERVLITTLTKRMAEDLTEYLQERGIKVRYLHSEIQSIQRIEIIQDLREGVFDVLIGVNLLREGLDLPEVSLVAILDADKEGFLRATRSLIQTIGRAARHIRGQAILYGDNLTDSMINAIEETKRRRAIQQEYNQKHGIIPQPIVKRSSNSILAFLDISRRLNSQQLEQVCENIEELSLEQIPELIQQLEAQMKEAAKNLEFESAAKYRDRIKQLRDKLLNHVR.

Residues 25–180 form the Helicase ATP-binding domain; sequence DSLQNQHRFQ…LLRALVSVQY (156 aa). Residue 38–45 coordinates ATP; it reads GATGTGKT. The Beta-hairpin motif lies at 91–114; sequence YYDYYQPEAYIPVSDTYIEKSSSI. A Helicase C-terminal domain is found at 429-595; that stretch reads QVDDLLGEIK…PIVKRSSNSI (167 aa). The UVR domain maps to 626–661; that stretch reads PELIQQLEAQMKEAAKNLEFESAAKYRDRIKQLRDK.

Belongs to the UvrB family. As to quaternary structure, forms a heterotetramer with UvrA during the search for lesions. Interacts with UvrC in an incision complex.

The protein localises to the cytoplasm. In terms of biological role, the UvrABC repair system catalyzes the recognition and processing of DNA lesions. A damage recognition complex composed of 2 UvrA and 2 UvrB subunits scans DNA for abnormalities. Upon binding of the UvrA(2)B(2) complex to a putative damaged site, the DNA wraps around one UvrB monomer. DNA wrap is dependent on ATP binding by UvrB and probably causes local melting of the DNA helix, facilitating insertion of UvrB beta-hairpin between the DNA strands. Then UvrB probes one DNA strand for the presence of a lesion. If a lesion is found the UvrA subunits dissociate and the UvrB-DNA preincision complex is formed. This complex is subsequently bound by UvrC and the second UvrB is released. If no lesion is found, the DNA wraps around the other UvrB subunit that will check the other stand for damage. This Microcystis aeruginosa (strain NIES-843 / IAM M-2473) protein is UvrABC system protein B.